Consider the following 412-residue polypeptide: Diphosphomevalonate decarboxylase MVD1, peroxisomal (412 aa).

Residue 23-26 participates in (R)-5-diphosphomevalonate binding; that stretch reads YWGK. The Peroxisomal targeting signal PTS2 motif lies at 40 to 48; sequence SVTLDPDHL. (R)-5-diphosphomevalonate-binding positions include Arg-78, 161–166, and Thr-217; that span reads SGSACR.

Belongs to the diphosphomevalonate decarboxylase family. As to quaternary structure, homodimer.

The protein localises to the peroxisome. The enzyme catalyses (R)-5-diphosphomevalonate + ATP = isopentenyl diphosphate + ADP + phosphate + CO2. It participates in isoprenoid biosynthesis; isopentenyl diphosphate biosynthesis via mevalonate pathway; isopentenyl diphosphate from (R)-mevalonate: step 3/3. Performs the first committed step in the biosynthesis of isoprene-containing compounds such as sterols and terpenoids. Is specific for (R)-5-diphosphomevalonate (MVAPP). The catalytic efficiency with (R)-5-phosphomevalonate (MVAP) as substrate is 10000-fold lower than for MVAPP. Can complement a yeast mutant defective in MVD activity. In Arabidopsis thaliana (Mouse-ear cress), this protein is Diphosphomevalonate decarboxylase MVD1, peroxisomal.